A 309-amino-acid chain; its full sequence is Manganese ABC transporter substrate-binding lipoprotein PsaA (309 aa).

An N-terminal signal peptide occupies residues Met-1–Ala-19. Cys-20 carries the N-palmitoyl cysteine lipid modification. Cys-20 carries S-diacylglycerol cysteine lipidation. Positions 67, 139, 205, and 280 each coordinate Mn(2+).

This sequence belongs to the bacterial solute-binding protein 9 family. Lipoprotein receptor antigen (Lrai) subfamily.

The protein localises to the cell membrane. Functionally, part of the ATP-riven (ABC) transport system PsaABC involved in manganese import. Binds manganese with high affinity and specificity and delivers it to the membrane permease for translocation into the cytoplasm. Also acts as an adhesin which is involved on adherence to extracellular matrix. The sequence is that of Manganese ABC transporter substrate-binding lipoprotein PsaA (psaA) from Streptococcus mitis.